Consider the following 376-residue polypeptide: DNA replication and repair protein RecF (376 aa).

35–42 (GDNGSGKT) contributes to the ATP binding site.

Belongs to the RecF family.

It is found in the cytoplasm. The RecF protein is involved in DNA metabolism; it is required for DNA replication and normal SOS inducibility. RecF binds preferentially to single-stranded, linear DNA. It also seems to bind ATP. The chain is DNA replication and repair protein RecF from Agrobacterium fabrum (strain C58 / ATCC 33970) (Agrobacterium tumefaciens (strain C58)).